A 57-amino-acid chain; its full sequence is COP9 signalosome complex subunit 9 (57 aa).

It belongs to the CSN9 family. In terms of assembly, component of the CSN complex, probably composed of cops1, cops2, cops3, cops4, cops5, cops6, cops7, cops8 and cops9.

Its subcellular location is the nucleus. The protein localises to the cytoplasm. The protein resides in the nucleoplasm. Its function is as follows. Component of the COP9 signalosome complex (CSN), a complex involved in various cellular and developmental processes. The CSN complex is an essential regulator of the ubiquitin (Ubl) conjugation pathway by mediating the deneddylation of the cullin subunits of SCF-type E3 ligase complexes, leading to decrease the Ubl ligase activity. May play a role in cell proliferation. The polypeptide is COP9 signalosome complex subunit 9 (Danio rerio (Zebrafish)).